We begin with the raw amino-acid sequence, 205 residues long: Glycerol-3-phosphate acyltransferase (205 aa).

The Periplasmic segment spans residues 1–3 (MSA). Residues 4-24 (IAPGMILFAYLCGSISSAILV) form a helical membrane-spanning segment. The Cytoplasmic segment spans residues 25 to 52 (CRIAGLPDPRESGSGNPGATNVLRIGGK). A helical transmembrane segment spans residues 53–73 (GAAVAVLIFDILKGMLPVWGA). The Periplasmic portion of the chain corresponds to 74–80 (YALGVTP). Residues 81-101 (FWLGLIAIAACLGHIWPVFFG) traverse the membrane as a helical segment. Residues 102–111 (FKGGKGVATA) lie on the Cytoplasmic side of the membrane. The chain crosses the membrane as a helical span at residues 112 to 132 (FGAIAPIGWDLTGVMAGTWLL). Residues 133–137 (TVLLS) lie on the Periplasmic side of the membrane. The helical transmembrane segment at 138-158 (GYSSLGAIVSALIAPFYVWWF) threads the bilayer. Over 159-205 (KPQFTFPVSMLSCLILLRHHDNIQRLWRRQETKIWTKLKKKRQKDSE) the chain is Cytoplasmic.

The protein belongs to the PlsY family. In terms of assembly, probably interacts with PlsX.

The protein resides in the cell inner membrane. The catalysed reaction is sn-glycerol 3-phosphate + an acyl-CoA = a 1-acyl-sn-glycero-3-phosphate + CoA. It carries out the reaction a fatty acyl-[ACP] + sn-glycerol 3-phosphate = a 1-acyl-sn-glycero-3-phosphate + holo-[ACP]. It functions in the pathway lipid metabolism; phospholipid metabolism. Catalyzes the transfer of an acyl group from acyl-ACP to glycerol-3-phosphate (G3P) to form lysophosphatidic acid (LPA). This enzyme can also utilize acyl-CoA as fatty acyl donor, but not acyl-PO(4). This is Glycerol-3-phosphate acyltransferase from Salmonella schwarzengrund (strain CVM19633).